The following is a 450-amino-acid chain: Phosphoglucosamine mutase (450 aa).

Residue Ser103 is the Phosphoserine intermediate of the active site. The Mg(2+) site is built by Ser103, Asp243, Asp245, and Asp247. Ser103 bears the Phosphoserine mark.

The protein belongs to the phosphohexose mutase family. Mg(2+) is required as a cofactor. Post-translationally, activated by phosphorylation.

It catalyses the reaction alpha-D-glucosamine 1-phosphate = D-glucosamine 6-phosphate. Functionally, catalyzes the conversion of glucosamine-6-phosphate to glucosamine-1-phosphate. This Lactobacillus delbrueckii subsp. bulgaricus (strain ATCC 11842 / DSM 20081 / BCRC 10696 / JCM 1002 / NBRC 13953 / NCIMB 11778 / NCTC 12712 / WDCM 00102 / Lb 14) protein is Phosphoglucosamine mutase.